The following is a 543-amino-acid chain: Carboxypeptidase Y homolog A (543 aa).

A signal peptide spans 1 to 17 (MKVATSALLVGAVSASV). The propeptide occupies 18–128 (GPQQQVLKFP…KLENYSMRTK (111 aa)). Asn-122 and Asn-213 each carry an N-linked (GlcNAc...) asparagine glycan. Disulfide bonds link Cys-182/Cys-421, Cys-316/Cys-330, Cys-340/Cys-363, Cys-347/Cys-356, and Cys-385/Cys-391. Residue Ser-269 is part of the active site. Asp-460 is an active-site residue. N-linked (GlcNAc...) asparagine glycosylation is present at Asn-508. His-519 is a catalytic residue.

This sequence belongs to the peptidase S10 family.

The protein localises to the vacuole. It carries out the reaction Release of a C-terminal amino acid with broad specificity.. In terms of biological role, vacuolar carboxypeptidase involved in degradation of small peptides. Digests preferentially peptides containing an aliphatic or hydrophobic residue in P1' position, as well as methionine, leucine or phenylalanine in P1 position of ester substrate. This chain is Carboxypeptidase Y homolog A (CPYA), found in Leptosphaeria maculans (strain JN3 / isolate v23.1.3 / race Av1-4-5-6-7-8) (Blackleg fungus).